The primary structure comprises 291 residues: Ribosomal large subunit pseudouridine synthase B (291 aa).

In terms of domain architecture, S4 RNA-binding spans 3 to 63 (EKLQKVLARA…GHLISVKESA (61 aa)). Catalysis depends on aspartate 110, which acts as the Nucleophile. Residues 272–291 (VKRHSQIAGGRRSGGRNNNG) are disordered.

This sequence belongs to the pseudouridine synthase RsuA family.

The enzyme catalyses uridine(2605) in 23S rRNA = pseudouridine(2605) in 23S rRNA. Functionally, responsible for synthesis of pseudouridine from uracil-2605 in 23S ribosomal RNA. The sequence is that of Ribosomal large subunit pseudouridine synthase B (rluB) from Salmonella typhi.